Consider the following 593-residue polypeptide: Polyphenol oxidase, chloroplastic (593 aa).

Residues 1–13 are compositionally biased toward low complexity; that stretch reads MTSLSPPVVTTPT. The segment at 1–34 is disordered; that stretch reads MTSLSPPVVTTPTVPNPATKPLSPFSQNNSQVSL. The N-terminal 89 residues, 1–89, are a transit peptide targeting the chloroplast; it reads MTSLSPPVVT…GMGTDPFAFA (89 aa). Residues 24–34 show a composition bias toward polar residues; sequence PFSQNNSQVSL. Intrachain disulfides connect cysteine 100/cysteine 115 and cysteine 114/cysteine 176. Cu cation-binding residues include histidine 175, histidine 196, histidine 205, histidine 327, histidine 331, and histidine 361. The 2'-(S-cysteinyl)-histidine (Cys-His) cross-link spans 179–196; that stretch reads CDGAYDQVGFPELELQIH.

This sequence belongs to the tyrosinase family. Requires Cu(2+) as cofactor.

It is found in the plastid. The protein resides in the chloroplast thylakoid lumen. The enzyme catalyses 2 catechol + O2 = 2 1,2-benzoquinone + 2 H2O. Functionally, catalyzes the oxidation of mono- and o-diphenols to o-diquinones. This is Polyphenol oxidase, chloroplastic from Malus domestica (Apple).